The primary structure comprises 70 residues: DNA-directed RNA polymerase subunit omega (70 aa).

The protein belongs to the RNA polymerase subunit omega family. The RNAP catalytic core consists of 2 alpha, 1 beta, 1 beta' and 1 omega subunit. When a sigma factor is associated with the core the holoenzyme is formed, which can initiate transcription.

It carries out the reaction RNA(n) + a ribonucleoside 5'-triphosphate = RNA(n+1) + diphosphate. In terms of biological role, promotes RNA polymerase assembly. Latches the N- and C-terminal regions of the beta' subunit thereby facilitating its interaction with the beta and alpha subunits. In Bacillus cereus (strain G9842), this protein is DNA-directed RNA polymerase subunit omega.